Here is a 546-residue protein sequence, read N- to C-terminus: Chaperonin GroEL (546 aa).

ATP-binding positions include 29–32 (TMGP), K50, 86–90 (DGTTT), G414, and D492.

Belongs to the chaperonin (HSP60) family. In terms of assembly, forms a cylinder of 14 subunits composed of two heptameric rings stacked back-to-back. Interacts with the co-chaperonin GroES.

Its subcellular location is the cytoplasm. It carries out the reaction ATP + H2O + a folded polypeptide = ADP + phosphate + an unfolded polypeptide.. In terms of biological role, together with its co-chaperonin GroES, plays an essential role in assisting protein folding. The GroEL-GroES system forms a nano-cage that allows encapsulation of the non-native substrate proteins and provides a physical environment optimized to promote and accelerate protein folding. In Helicobacter pylori (strain J99 / ATCC 700824) (Campylobacter pylori J99), this protein is Chaperonin GroEL.